The chain runs to 88 residues: Kunitz-type U15-theraphotoxin-Hs1e (88 aa).

An N-terminal signal peptide occupies residues 1-27 (MGTARFLSAVLLLSVLLMVTFPALLSA). Positions 28–33 (EYHDGR) are excised as a propeptide. One can recognise a BPTI/Kunitz inhibitor domain in the interval 37–85 (CSLPSDSGDRLRFFEMWYFDGTTCTKFVYGGYGGNDNRFPTEKACMKRC). Intrachain disulfides connect Cys37–Cys85 and Cys60–Cys81.

It belongs to the venom Kunitz-type family. 03 (sub-Kunitz) subfamily. Expressed by the venom gland.

It is found in the secreted. Its function is as follows. Serine protease inhibitor that inhibits trypsin (Ki=9.61 nM), kallikrein (Ki=24.8 nM), and chymotrypsin. In Cyriopagopus schmidti (Chinese bird spider), this protein is Kunitz-type U15-theraphotoxin-Hs1e.